Reading from the N-terminus, the 342-residue chain is Ribosomal RNA small subunit methyltransferase C (342 aa).

It belongs to the methyltransferase superfamily. RsmC family. In terms of assembly, monomer.

The protein localises to the cytoplasm. It catalyses the reaction guanosine(1207) in 16S rRNA + S-adenosyl-L-methionine = N(2)-methylguanosine(1207) in 16S rRNA + S-adenosyl-L-homocysteine + H(+). Specifically methylates the guanine in position 1207 of 16S rRNA in the 30S particle. The polypeptide is Ribosomal RNA small subunit methyltransferase C (Klebsiella pneumoniae subsp. pneumoniae (strain ATCC 700721 / MGH 78578)).